The chain runs to 485 residues: Zinc finger protein 165 (485 aa).

A Glycyl lysine isopeptide (Lys-Gly) (interchain with G-Cter in SUMO2) cross-link involves residue Lys23. Positions 62-127 constitute an SCAN box domain; the sequence is GPREALSRLR…EEAVTILEDL (66 aa). Residues Lys162 and Lys195 each participate in a glycyl lysine isopeptide (Lys-Gly) (interchain with G-Cter in SUMO2) cross-link. The C2H2-type 1; degenerate zinc finger occupies 290–314; it reads KSCKHGTCDQSFKWNSDFINHQIIY. 5 consecutive C2H2-type zinc fingers follow at residues 344–366, 372–394, 400–422, 428–450, and 456–478; these read HQCN…QRIH, YECN…RRIH, FGCK…QRIH, YECS…FRIH, and YECS…QRIH.

The protein belongs to the krueppel C2H2-type zinc-finger protein family. In terms of tissue distribution, expressed specifically in testis.

The protein resides in the nucleus. In terms of biological role, may be involved in transcriptional regulation. The polypeptide is Zinc finger protein 165 (ZNF165) (Homo sapiens (Human)).